Here is a 287-residue protein sequence, read N- to C-terminus: tRNA pseudouridine synthase B (287 aa).

Residue Asp-38 is the Nucleophile of the active site.

It belongs to the pseudouridine synthase TruB family. Type 1 subfamily.

It catalyses the reaction uridine(55) in tRNA = pseudouridine(55) in tRNA. Responsible for synthesis of pseudouridine from uracil-55 in the psi GC loop of transfer RNAs. The chain is tRNA pseudouridine synthase B from Aquifex aeolicus (strain VF5).